The following is a 525-amino-acid chain: MHRAPSPTAEQPPGRGDNTRRTPQPRFKASAPAMALPRTLGELQLYRVLQRANLLSYYETFIQQGGDDVQQLCEAGEEEFLEIMALVGMATKPLHVRRLQKALREWATNPGLFSQPVPAVPVSSIPLFKISETAGTRKGSMSNGHGSPGEKAGSARSFSPKSPLELGEKLSPLPGGPGAGDPRIWPGQSTPESDVGAGGEEEAGSPPFSPPAGGGVSEGPGVGGVAAGGAGGGPDRLEPEMVRMVVESVERIFRSFPRGDTGEIASLLKLNKKLARSVGHIFEMDDHDAQKEEEIRKYSVIYGRLDSKRREGKQLSLHELTINEAAAQFCMRDNTLLLRRVELFSLSRQVARESTYLSSLKGSRLHSEELGGPPLKKLKQEVGEQSHNEIQQPPPGPESYAPPYRPSLEEDSASLSGESLDGHLQAVGSCPRLTPPPADLPLALPAHGLWSRHILQQTLMDEGLRLARLVSHDRVGRLSPCVPAKPPLAEFEEGLLDRCPAPGPHPALVEGRRSSVKVEAEASRQ.

A disordered region spans residues 1-31 (MHRAPSPTAEQPPGRGDNTRRTPQPRFKASA). Position 6 is a phosphoserine (Ser-6). The tract at residues 35–113 (ALPRTLGELQ…REWATNPGLF (79 aa)) is NCD1. The disordered stretch occupies residues 135 to 238 (GTRKGSMSNG…GAGGGPDRLE (104 aa)). A phosphoserine mark is found at Ser-157, Ser-159, Ser-162, and Ser-171. Residues 212-234 (AGGGVSEGPGVGGVAAGGAGGGP) show a composition bias toward gly residues. The segment at 267–356 (LLKLNKKLAR…SRQVARESTY (90 aa)) is NCD2. A necessary for nuclear localization region spans residues 353 to 384 (ESTYLSSLKGSRLHSEELGGPPLKKLKQEVGE). A Glycyl lysine isopeptide (Lys-Gly) (interchain with G-Cter in SUMO1) cross-link involves residue Lys-379. The interval 381–416 (EVGEQSHNEIQQPPPGPESYAPPYRPSLEEDSASLS) is disordered. Phosphoserine is present on Ser-479. The disordered stretch occupies residues 501-525 (APGPHPALVEGRRSSVKVEAEASRQ). The span at 510 to 525 (EGRRSSVKVEAEASRQ) shows a compositional bias: basic and acidic residues. Residue Lys-517 forms a Glycyl lysine isopeptide (Lys-Gly) (interchain with G-Cter in SUMO1); alternate linkage. Lys-517 participates in a covalent cross-link: Glycyl lysine isopeptide (Lys-Gly) (interchain with G-Cter in SUMO2); alternate.

Belongs to the NAB family. As to quaternary structure, homomultimers may associate with EGR1 bound to DNA. Sumoylation by EGR2 represses EGR2 transcriptional activity in hindbrain. As to expression, highly expressed in brain and thymus, and at lower levels in spleen, kidney, heart and testis. Isoform 1 is predominantly expressed in testis, whereas isoform 3 is more abundant in thymus.

The protein localises to the nucleus. In terms of biological role, acts as a transcriptional repressor for zinc finger transcription factors EGR1 and EGR2. Isoform 2 lacks repression ability. The chain is NGFI-A-binding protein 2 (Nab2) from Mus musculus (Mouse).